We begin with the raw amino-acid sequence, 156 residues long: Small ribosomal subunit protein uS7 (156 aa).

This sequence belongs to the universal ribosomal protein uS7 family. Part of the 30S ribosomal subunit. Contacts proteins S9 and S11.

Functionally, one of the primary rRNA binding proteins, it binds directly to 16S rRNA where it nucleates assembly of the head domain of the 30S subunit. Is located at the subunit interface close to the decoding center, probably blocks exit of the E-site tRNA. In Shewanella sp. (strain ANA-3), this protein is Small ribosomal subunit protein uS7.